A 129-amino-acid polypeptide reads, in one-letter code: Glycine cleavage system H protein (129 aa).

Residues 24 to 106 (AVRIGLSAYA…HGEGWLLVIQ (83 aa)) form the Lipoyl-binding domain. An N6-lipoyllysine modification is found at K65.

It belongs to the GcvH family. As to quaternary structure, the glycine cleavage system is composed of four proteins: P, T, L and H. Requires (R)-lipoate as cofactor.

The glycine cleavage system catalyzes the degradation of glycine. The H protein shuttles the methylamine group of glycine from the P protein to the T protein. The protein is Glycine cleavage system H protein of Synechococcus sp. (strain WH7803).